We begin with the raw amino-acid sequence, 175 residues long: Large ribosomal subunit protein uL10 (175 aa).

The protein belongs to the universal ribosomal protein uL10 family. Part of the ribosomal stalk of the 50S ribosomal subunit. The N-terminus interacts with L11 and the large rRNA to form the base of the stalk. The C-terminus forms an elongated spine to which L12 dimers bind in a sequential fashion forming a multimeric L10(L12)X complex.

Forms part of the ribosomal stalk, playing a central role in the interaction of the ribosome with GTP-bound translation factors. In Prochlorococcus marinus (strain NATL2A), this protein is Large ribosomal subunit protein uL10.